The following is a 144-amino-acid chain: C-C motif chemokine 25 (144 aa).

Residues 1–23 form the signal peptide; it reads MKLWLFACLVACFVGAWMPVVHA. Disulfide bonds link Cys30–Cys58 and Cys31–Cys73. The disordered stretch occupies residues 98 to 144; that stretch reads KSASDSQTERKKSNHMKSKVENPNSTSVRSATLGHPRMVMMPRKTNN. Residues 118 to 127 are compositionally biased toward polar residues; sequence ENPNSTSVRS.

The protein belongs to the intercrine beta (chemokine CC) family. In terms of tissue distribution, specifically expressed by thymic dendritic cells. High levels in thymus and small intestine.

The protein localises to the secreted. Its function is as follows. Potentially involved in T-cell development. Recombinant protein shows chemotactic activity on thymocytes, macrophages, THP-1 cells, and dendritics cells but is inactive on peripheral blood lymphocytes and neutrophils. Binds to CCR9. Binds to atypical chemokine receptor ACKR4 and mediates the recruitment of beta-arrestin (ARRB1/2) to ACKR4. In Mus musculus (Mouse), this protein is C-C motif chemokine 25 (Ccl25).